Here is a 66-residue protein sequence, read N- to C-terminus: Protein I177L (66 aa).

Belongs to the asfivirus I177L family.

The protein localises to the virion. This chain is Protein I177L, found in African swine fever virus (isolate Tick/Malawi/Lil 20-1/1983) (ASFV).